The following is a 189-amino-acid chain: Interferon alpha-B (189 aa).

The signal sequence occupies residues 1 to 23; that stretch reads MAPAWSFLLALLLLSCNAICSLG. 2 cysteine pairs are disulfide-bonded: Cys-24–Cys-122 and Cys-52–Cys-162.

It belongs to the alpha/beta interferon family.

The protein resides in the secreted. Produced by macrophages, IFN-alpha have antiviral activities. Interferon stimulates the production of two enzymes: a protein kinase and an oligoadenylate synthetase. This Bos taurus (Bovine) protein is Interferon alpha-B (IFNAB).